Here is a 46-residue protein sequence, read N- to C-terminus: Peroxidase 1 (46 aa).

This sequence belongs to the peroxidase family. Classical plant (class III) peroxidase subfamily. Requires heme b as cofactor. Ca(2+) is required as a cofactor.

It is found in the secreted. It carries out the reaction 2 a phenolic donor + H2O2 = 2 a phenolic radical donor + 2 H2O. In terms of biological role, removal of H(2)O(2), oxidation of toxic reductants, biosynthesis and degradation of lignin, suberization, auxin catabolism, response to environmental stresses such as wounding, pathogen attack and oxidative stress. These functions might be dependent on each isozyme/isoform in each plant tissue. The sequence is that of Peroxidase 1 from Catharanthus roseus (Madagascar periwinkle).